An 830-amino-acid chain; its full sequence is Lon protease 3 (830 aa).

A Lon N-terminal domain is found at 19-213 (VPLLPLRDII…RLIELMQAEI (195 aa)). 367 to 374 (GPPGVGKT) serves as a coordination point for ATP. The Lon proteolytic domain occupies 604 to 784 (RDEVGLVNGL…DDVLREALIL (181 aa)). Active-site residues include S690 and K733. Over residues 811 to 823 (PVKAPPAAAGEPT) the composition is skewed to low complexity. The disordered stretch occupies residues 811–830 (PVKAPPAAAGEPTPAAPPGA).

This sequence belongs to the peptidase S16 family. As to quaternary structure, homohexamer. Organized in a ring with a central cavity.

The protein resides in the cytoplasm. It carries out the reaction Hydrolysis of proteins in presence of ATP.. Functionally, ATP-dependent serine protease that mediates the selective degradation of mutant and abnormal proteins as well as certain short-lived regulatory proteins. Required for cellular homeostasis and for survival from DNA damage and developmental changes induced by stress. Degrades polypeptides processively to yield small peptide fragments that are 5 to 10 amino acids long. Binds to DNA in a double-stranded, site-specific manner. This chain is Lon protease 3, found in Sorangium cellulosum (strain So ce56) (Polyangium cellulosum (strain So ce56)).